Here is a 367-residue protein sequence, read N- to C-terminus: Uroporphyrinogen decarboxylase (367 aa).

Substrate contacts are provided by residues 28–32 (RQAGR), Asp-78, Tyr-158, Thr-213, and His-334.

Belongs to the uroporphyrinogen decarboxylase family. As to quaternary structure, homodimer.

The protein localises to the cytoplasm. It carries out the reaction uroporphyrinogen III + 4 H(+) = coproporphyrinogen III + 4 CO2. It functions in the pathway porphyrin-containing compound metabolism; protoporphyrin-IX biosynthesis; coproporphyrinogen-III from 5-aminolevulinate: step 4/4. Its function is as follows. Catalyzes the decarboxylation of four acetate groups of uroporphyrinogen-III to yield coproporphyrinogen-III. The polypeptide is Uroporphyrinogen decarboxylase (Ralstonia pickettii (strain 12J)).